An 840-amino-acid polypeptide reads, in one-letter code: Probable inorganic carbon transporter subunit DabA (840 aa).

Zn(2+) contacts are provided by Cys355, Asp357, His539, and Cys554.

It belongs to the inorganic carbon transporter (TC 9.A.2) DabA family. Forms a complex with DabB. Zn(2+) is required as a cofactor.

The protein resides in the cell membrane. In terms of biological role, part of an energy-coupled inorganic carbon pump. In Roseiflexus castenholzii (strain DSM 13941 / HLO8), this protein is Probable inorganic carbon transporter subunit DabA.